Here is a 315-residue protein sequence, read N- to C-terminus: Tyrosine recombinase XerC (315 aa).

One can recognise a Core-binding (CB) domain in the interval 1-103 (MIASFYAFLD…AIKSFAKFCV (103 aa)). Residues 124–306 (ELPSPLTYEQ…SMKLKKQIHD (183 aa)) form the Tyr recombinase domain. Active-site residues include R164, K188, H258, R261, and H284. The active-site O-(3'-phospho-DNA)-tyrosine intermediate is Y293.

It belongs to the 'phage' integrase family. XerC subfamily. Forms a cyclic heterotetrameric complex composed of two molecules of XerC and two molecules of XerD.

Its subcellular location is the cytoplasm. In terms of biological role, site-specific tyrosine recombinase, which acts by catalyzing the cutting and rejoining of the recombining DNA molecules. The XerC-XerD complex is essential to convert dimers of the bacterial chromosome into monomers to permit their segregation at cell division. It also contributes to the segregational stability of plasmids. The protein is Tyrosine recombinase XerC of Chlamydia muridarum (strain MoPn / Nigg).